Here is a 1579-residue protein sequence, read N- to C-terminus: MAP kinase kinase kinase SSK2 (1579 aa).

The segment at 1–70 (MSHSDYFNYK…HSTQYFRSPN (70 aa)) is disordered. Low complexity predominate over residues 21–44 (SSKMRQSSSSSSSRLRSESLGRNS). Polar residues predominate over residues 45-67 (NTTQARVASSPISPGLHSTQYFR). S57, S62, S78, and S118 each carry phosphoserine. 2 disordered regions span residues 97–155 (FFHQ…ESEI) and 190–243 (SIMS…GSTT). Residues 104–118 (SGSSSSSARSSRRPS) show a composition bias toward low complexity. Over residues 127 to 139 (NPQQSLPKLSTQP) the composition is skewed to polar residues. A compositionally biased stretch (basic and acidic residues) spans 144 to 155 (KKVEASKTESEI). Phosphoserine is present on S290. Residues 1266 to 1558 (WQKRNFIGGG…AVELLMDPWI (293 aa)) form the Protein kinase domain. Residues 1272 to 1280 (IGGGTFGRV) and K1295 contribute to the ATP site. The active-site Proton acceptor is the D1390. The residue at position 1424 (S1424) is a Phosphoserine.

This sequence belongs to the protein kinase superfamily. STE Ser/Thr protein kinase family. MAP kinase kinase kinase subfamily. Interacts with by SSK1.

It carries out the reaction L-seryl-[protein] + ATP = O-phospho-L-seryl-[protein] + ADP + H(+). The enzyme catalyses L-threonyl-[protein] + ATP = O-phospho-L-threonyl-[protein] + ADP + H(+). Kinase involved in a signal transduction pathway that is activated by changes in the osmolarity of the extracellular environment. Activates the PBS2 MAP kinase kinase by phosphorylation. The polypeptide is MAP kinase kinase kinase SSK2 (SSK2) (Saccharomyces cerevisiae (strain ATCC 204508 / S288c) (Baker's yeast)).